The sequence spans 407 residues: UDP-N-acetyl-D-mannosamine dehydrogenase (407 aa).

It belongs to the UDP-glucose/GDP-mannose dehydrogenase family.

The enzyme catalyses UDP-N-acetyl-alpha-D-mannosamine + 2 NAD(+) + H2O = UDP-N-acetyl-alpha-D-mannosaminouronate + 2 NADH + 3 H(+). Its pathway is capsule biogenesis; capsule polysaccharide biosynthesis. In terms of biological role, dehydrogenase involved in the biosynthesis of capsular polysaccharides. Catalyzes the NAD(+)-dependent oxidation of UDP-N-acetyl-D-mannosamine (UDP-ManNAc) to UDP-N-acetyl-D-mannosaminuronic acid (UDP-ManNAcA). The sequence is that of UDP-N-acetyl-D-mannosamine dehydrogenase from Campylobacter jejuni.